A 767-amino-acid polypeptide reads, in one-letter code: MGSACEAGTDEPSRDDVKGTGNGILENGHSHKSEEEEWRNGMGEDLPNGHSTPPEPQQTDEQKEHQVRIVRWERFLPVKTLRVLLVENDDSTRQVVSALLRKCCYEVIPAENGLHAWQCLEDLQNHIDLVLTEVVMPRLSGIGLLSKITSHKICKDIPVIMMSSNDSMGTVFKCLSKGAVDFLVKPIRKNELKNLWQHVWRRCHSSSGSGSESGIRTQKCTKPKVDDEYENNSGSNNDNEDDDDNDEDDDDLSVGHNARDGSDNGSGTQSSWTKRAVEIDSPQQMSPDQPSDLPDSTCAQVIHPTSEICSNRWLPTANKRSGKKHKENNDDSMGKYLEIGAPRNSSMEYQSSPREMSVNPTEKQHETLMPQSKTTRETDSRNTQNEPTTQTVDLISSIARSTDDKQVVRINNAPDCSSKVPDGNDKNRDSLIDMTSEELGLKRLKTTGSATEIHDERNILKRSDLSAFTRYHTTVASNQGGAGFGGSCSPQDNSSEALKTDSNCKVKSNSDAAEIKQGSNGSSNNNDMGSSTKNAITKPSSNRGKVISPSAVKATQHTSAFHPVQRQTSPANVVGKDKVDEGIANGVNVGHPVDVQNSFMQHHHHVHYYVHVMTQQQQQPSIERGSSDAQCGSSNVFDPPIEGHAANYSVNGSFSGGHNGNNGQRGPSTAPNVGRPNMETVNGIVDENGAGGGNGSGSGSGNDLYQNGVCYREAALNKFRQKRKVRNFGKKVRYQSRKRLAEQRPRIRGQFVRQSGQEDQAGQDEDR.

A disordered region spans residues methionine 1 to glutamate 64. One can recognise a Response regulatory domain in the interval arginine 82–tryptophan 200. Over residues serine 205–glycine 214 the composition is skewed to low complexity. Disordered regions lie at residues serine 205 to tryptophan 272, arginine 312 to threonine 388, alanine 476 to valine 546, alanine 646 to glycine 701, and asparagine 727 to arginine 767. A compositionally biased stretch (acidic residues) spans aspartate 238 to leucine 252. Polar residues-rich tracts occupy residues aspartate 263–tryptophan 272, arginine 343–threonine 361, and cysteine 488–alanine 497. Over residues glycine 518–serine 531 the composition is skewed to low complexity. Residues threonine 532 to arginine 543 show a composition bias toward polar residues. Gly residues predominate over residues glycine 689–serine 700. One can recognise a CCT domain in the interval arginine 712–glutamine 754. Positions asparagine 727–lysine 738 are enriched in basic residues.

It belongs to the ARR-like family.

The protein resides in the nucleus. Controls photoperiodic flowering response. Seems to be one of the component of the circadian clock. Expression of several members of the ARR-like family is controlled by circadian rhythm. The particular coordinated sequential expression of PRR73, PRR37, PRR95, PRR59 and PPR1 result to circadian waves that may be at the basis of the endogenous circadian clock. This is Two-component response regulator-like PRR73 (PRR73) from Oryza sativa subsp. indica (Rice).